Reading from the N-terminus, the 288-residue chain is Shikimate dehydrogenase (NADP(+)) (288 aa).

Shikimate is bound by residues serine 14–serine 16 and threonine 63. Lysine 67 functions as the Proton acceptor in the catalytic mechanism. NADP(+) is bound at residue glutamate 79. Asparagine 88 and aspartate 103 together coordinate shikimate. Residues glycine 127–alanine 131, asparagine 151–lysine 156, and methionine 219 contribute to the NADP(+) site. Tyrosine 221 is a binding site for shikimate. NADP(+) is bound at residue glycine 242.

The protein belongs to the shikimate dehydrogenase family. In terms of assembly, homodimer.

It catalyses the reaction shikimate + NADP(+) = 3-dehydroshikimate + NADPH + H(+). The protein operates within metabolic intermediate biosynthesis; chorismate biosynthesis; chorismate from D-erythrose 4-phosphate and phosphoenolpyruvate: step 4/7. Its function is as follows. Involved in the biosynthesis of the chorismate, which leads to the biosynthesis of aromatic amino acids. Catalyzes the reversible NADPH linked reduction of 3-dehydroshikimate (DHSA) to yield shikimate (SA). This chain is Shikimate dehydrogenase (NADP(+)), found in Caldicellulosiruptor bescii (strain ATCC BAA-1888 / DSM 6725 / KCTC 15123 / Z-1320) (Anaerocellum thermophilum).